The primary structure comprises 213 residues: Probable GH family 25 lysozyme 4 (213 aa).

Positions 1–19 (MRLFLLLITFIALFGAINA) are cleaved as a signal peptide. Residues 21-213 (SGVDISQGSS…VGYDFNWYPN (193 aa)) enclose the Ch-type lysozyme domain. Active-site residues include Asp24, Asp112, and Glu114.

Belongs to the glycosyl hydrolase 25 family.

It is found in the secreted. The enzyme catalyses Hydrolysis of (1-&gt;4)-beta-linkages between N-acetylmuramic acid and N-acetyl-D-glucosamine residues in a peptidoglycan and between N-acetyl-D-glucosamine residues in chitodextrins.. This is Probable GH family 25 lysozyme 4 from Dictyostelium discoideum (Social amoeba).